The following is a 405-amino-acid chain: Peroxisomal membrane protein PEX13 (405 aa).

Positions 1-11 (MASQPPPPPKP) are enriched in pro residues. Residues 1–71 (MASQPPPPPK…SQQTGSNNVN (71 aa)) are disordered. Over 1–136 (MASQPPPPPK…SSRGAFQSIE (136 aa)) the chain is Peroxisomal matrix. Over residues 61–71 (PSQQTGSNNVN) the composition is skewed to polar residues. Residues 137–157 (SIVHAFASVSMMMDATFSAVY) traverse the membrane as a helical segment. The tract at residues 147–235 (MMMDATFSAV…EDQATNSAKS (89 aa)) is targeting to peroxisomes. Residues 158–176 (NSFRAVLDVANHFSRLKIH) are Cytoplasmic-facing. Residues 177-194 (FTKVFSAFALVRTIRYLY) form a helical membrane-spanning segment. The interval 177 to 198 (FTKVFSAFALVRTIRYLYRRLQ) is interaction with PEX19. Residues 195-235 (RRLQWMMGLRRGSENEDLWAESEGTVACLSAEDQATNSAKS) lie on the Peroxisomal matrix side of the membrane. A helical membrane pass occupies residues 236–256 (WPIFLFFAVILGGPYLIWKLL). The Cytoplasmic portion of the chain corresponds to 257–405 (STHNDEVTDN…TGKNGDKQDL (149 aa)). The region spanning 274–338 (DDHVVARAEY…PANYVKILGK (65 aa)) is the SH3 domain. Serine 356 is subject to Phosphoserine.

This sequence belongs to the peroxin-13 family. As to quaternary structure, interacts (via SH3 domain) with PEX14 (via SH3-binding motif); forming the PEX13-PEX14 docking complex. Interacts with PEX19.

It is found in the peroxisome membrane. Component of the PEX13-PEX14 docking complex, a translocon channel that specifically mediates the import of peroxisomal cargo proteins bound to PEX5 receptor. The PEX13-PEX14 docking complex forms a large import pore which can be opened to a diameter of about 9 nm. Mechanistically, PEX5 receptor along with cargo proteins associates with the PEX14 subunit of the PEX13-PEX14 docking complex in the cytosol, leading to the insertion of the receptor into the organelle membrane with the concomitant translocation of the cargo into the peroxisome matrix. Involved in the import of PTS1- and PTS2-type containing proteins. This Mus musculus (Mouse) protein is Peroxisomal membrane protein PEX13.